We begin with the raw amino-acid sequence, 262 residues long: Putative non-heme bromoperoxidase BpoC (262 aa).

Substrate-binding positions include R21, 87-88, and R120; that span reads SM. S87 is a catalytic residue. Catalysis depends on residues D211 and H239. Position 239 (H239) interacts with substrate.

This sequence belongs to the AB hydrolase superfamily. As to quaternary structure, homodimer.

The polypeptide is Putative non-heme bromoperoxidase BpoC (bpoC) (Mycobacterium tuberculosis (strain CDC 1551 / Oshkosh)).